The primary structure comprises 181 residues: Adenine phosphoribosyltransferase (181 aa).

The protein belongs to the purine/pyrimidine phosphoribosyltransferase family. In terms of assembly, homodimer.

The protein localises to the cytoplasm. It catalyses the reaction AMP + diphosphate = 5-phospho-alpha-D-ribose 1-diphosphate + adenine. It participates in purine metabolism; AMP biosynthesis via salvage pathway; AMP from adenine: step 1/1. Its function is as follows. Catalyzes a salvage reaction resulting in the formation of AMP, that is energically less costly than de novo synthesis. This is Adenine phosphoribosyltransferase from Rhodopseudomonas palustris (strain BisB5).